The following is a 631-amino-acid chain: 1-deoxy-D-xylulose-5-phosphate synthase (631 aa).

Residues 1–21 (MPTTFHEIPRERPLTPLLDSA) are disordered. Thiamine diphosphate is bound by residues His87 and 128-130 (GHS). Asp159 contacts Mg(2+). Residues 160-161 (GA), Asn188, Phe295, and Glu377 contribute to the thiamine diphosphate site. Asn188 is a Mg(2+) binding site.

This sequence belongs to the transketolase family. DXPS subfamily. Homodimer. Mg(2+) is required as a cofactor. Thiamine diphosphate serves as cofactor.

It carries out the reaction D-glyceraldehyde 3-phosphate + pyruvate + H(+) = 1-deoxy-D-xylulose 5-phosphate + CO2. It functions in the pathway metabolic intermediate biosynthesis; 1-deoxy-D-xylulose 5-phosphate biosynthesis; 1-deoxy-D-xylulose 5-phosphate from D-glyceraldehyde 3-phosphate and pyruvate: step 1/1. Functionally, catalyzes the acyloin condensation reaction between C atoms 2 and 3 of pyruvate and glyceraldehyde 3-phosphate to yield 1-deoxy-D-xylulose-5-phosphate (DXP). This chain is 1-deoxy-D-xylulose-5-phosphate synthase, found in Ectopseudomonas mendocina (strain ymp) (Pseudomonas mendocina).